The sequence spans 416 residues: Gamma-glutamyl phosphate reductase (416 aa).

This sequence belongs to the gamma-glutamyl phosphate reductase family.

The protein resides in the cytoplasm. The catalysed reaction is L-glutamate 5-semialdehyde + phosphate + NADP(+) = L-glutamyl 5-phosphate + NADPH + H(+). It participates in amino-acid biosynthesis; L-proline biosynthesis; L-glutamate 5-semialdehyde from L-glutamate: step 2/2. Its function is as follows. Catalyzes the NADPH-dependent reduction of L-glutamate 5-phosphate into L-glutamate 5-semialdehyde and phosphate. The product spontaneously undergoes cyclization to form 1-pyrroline-5-carboxylate. This is Gamma-glutamyl phosphate reductase from Streptococcus pyogenes serotype M3 (strain ATCC BAA-595 / MGAS315).